The following is a 105-amino-acid chain: DNA-directed RNA polymerase subunit omega (105 aa).

It belongs to the RNA polymerase subunit omega family. The RNAP catalytic core consists of 2 alpha, 1 beta, 1 beta' and 1 omega subunit. When a sigma factor is associated with the core the holoenzyme is formed, which can initiate transcription.

It catalyses the reaction RNA(n) + a ribonucleoside 5'-triphosphate = RNA(n+1) + diphosphate. Promotes RNA polymerase assembly. Latches the N- and C-terminal regions of the beta' subunit thereby facilitating its interaction with the beta and alpha subunits. This chain is DNA-directed RNA polymerase subunit omega, found in Streptococcus pyogenes serotype M12 (strain MGAS2096).